Here is a 447-residue protein sequence, read N- to C-terminus: Phosphoglucosamine mutase (447 aa).

Residue serine 102 is the Phosphoserine intermediate of the active site. Mg(2+) is bound by residues serine 102, aspartate 241, aspartate 243, and aspartate 245. Residue serine 102 is modified to Phosphoserine.

It belongs to the phosphohexose mutase family. Mg(2+) serves as cofactor. Post-translationally, activated by phosphorylation.

The enzyme catalyses alpha-D-glucosamine 1-phosphate = D-glucosamine 6-phosphate. Its function is as follows. Catalyzes the conversion of glucosamine-6-phosphate to glucosamine-1-phosphate. The protein is Phosphoglucosamine mutase of Pseudomonas savastanoi pv. phaseolicola (strain 1448A / Race 6) (Pseudomonas syringae pv. phaseolicola (strain 1448A / Race 6)).